The following is a 76-amino-acid chain: Sec-independent protein translocase protein TatA (76 aa).

A helical membrane pass occupies residues 1–21 (MGGLSIWHWLIVLLIVALVFG). The tract at residues 40–76 (KDGMKEGETPADAQQLPRSGAVDVNAKETTRSDSNKA) is disordered. Over residues 64–76 (NAKETTRSDSNKA) the composition is skewed to basic and acidic residues.

This sequence belongs to the TatA/E family. As to quaternary structure, the Tat system comprises two distinct complexes: a TatABC complex, containing multiple copies of TatA, TatB and TatC subunits, and a separate TatA complex, containing only TatA subunits. Substrates initially bind to the TatABC complex, which probably triggers association of the separate TatA complex to form the active translocon.

It localises to the cell inner membrane. In terms of biological role, part of the twin-arginine translocation (Tat) system that transports large folded proteins containing a characteristic twin-arginine motif in their signal peptide across membranes. TatA could form the protein-conducting channel of the Tat system. The sequence is that of Sec-independent protein translocase protein TatA from Burkholderia cenocepacia (strain HI2424).